The primary structure comprises 106 residues: Nucleoid-associated protein Exig_0019 (106 aa).

Residues 1–16 (MRGMGNMNNMMKQMQK) show a composition bias toward low complexity. A disordered region spans residues 1–23 (MRGMGNMNNMMKQMQKMQKDMAK).

This sequence belongs to the YbaB/EbfC family. Homodimer.

It is found in the cytoplasm. Its subcellular location is the nucleoid. In terms of biological role, binds to DNA and alters its conformation. May be involved in regulation of gene expression, nucleoid organization and DNA protection. This chain is Nucleoid-associated protein Exig_0019, found in Exiguobacterium sibiricum (strain DSM 17290 / CCUG 55495 / CIP 109462 / JCM 13490 / 255-15).